A 449-amino-acid polypeptide reads, in one-letter code: Cortexillin-2 (449 aa).

The interval 1-231 (MTDLHKEWEK…ILYTSLFFHA (231 aa)) is actin-binding. 2 consecutive Calponin-homology (CH) domains span residues 10 to 119 (KVQE…RKYR) and 128 to 233 (KSSE…HAYR). Coiled-coil stretches lie at residues 232–364 (YRAK…AEGL) and 408–441 (QFEE…LKSA).

This sequence belongs to the cortexillin family. In terms of assembly, homodimer; parallel.

The protein localises to the cytoplasm. The protein resides in the cytoskeleton. In terms of biological role, actin-bundling protein. When linked to F-actin the actin filaments form preferentially anti-parallel bundles that associate into meshworks. Plays a major role in cytokinesis. In Heterostelium pallidum (strain ATCC 26659 / Pp 5 / PN500) (Cellular slime mold), this protein is Cortexillin-2 (ctxB).